The chain runs to 788 residues: 5-methyltetrahydropteroyltriglutamate--homocysteine methyltransferase (788 aa).

5-methyltetrahydropteroyltri-L-glutamate-binding positions include 24 to 27 (RELK) and lysine 140. L-homocysteine-binding positions include 463–465 (IGS) and glutamate 516. L-methionine-binding positions include 463 to 465 (IGS) and glutamate 516. Residues 547-548 (RC) and tryptophan 593 each bind 5-methyltetrahydropteroyltri-L-glutamate. Aspartate 631 serves as a coordination point for L-homocysteine. Residue aspartate 631 coordinates L-methionine. Glutamate 637 is a 5-methyltetrahydropteroyltri-L-glutamate binding site. Histidine 673, cysteine 675, and glutamate 697 together coordinate Zn(2+). Histidine 726 (proton donor) is an active-site residue. Cysteine 758 lines the Zn(2+) pocket.

This sequence belongs to the vitamin-B12 independent methionine synthase family. The cofactor is Zn(2+).

The catalysed reaction is 5-methyltetrahydropteroyltri-L-glutamate + L-homocysteine = tetrahydropteroyltri-L-glutamate + L-methionine. Its pathway is amino-acid biosynthesis; L-methionine biosynthesis via de novo pathway; L-methionine from L-homocysteine (MetE route): step 1/1. In terms of biological role, catalyzes the transfer of a methyl group from 5-methyltetrahydrofolate to homocysteine resulting in methionine formation. The protein is 5-methyltetrahydropteroyltriglutamate--homocysteine methyltransferase of Rhodopseudomonas palustris (strain ATCC BAA-98 / CGA009).